The primary structure comprises 244 residues: Methanethiol S-methyltransferase (244 aa).

5 helical membrane passes run Ile-7–Phe-27, Ile-41–Val-61, Leu-90–Ile-110, Val-120–Ile-140, and Gly-181–Ile-201.

This sequence belongs to the nurim family.

The protein resides in the membrane. The catalysed reaction is methanethiol + S-adenosyl-L-methionine = dimethyl sulfide + S-adenosyl-L-homocysteine + H(+). Catalyzes the methylation of methanethiol (MeSH) to yield dimethylsulphide (DMS). This is Methanethiol S-methyltransferase from Mycobacterium tuberculosis (strain ATCC 25618 / H37Rv).